A 329-amino-acid chain; its full sequence is Putative HTH-type transcriptional regulatory protein APE_0778 (329 aa).

One can recognise an HTH cro/C1-type domain in the interval 142–200 (LREKRLEKGLSLGHLAYMLKTSRKSIYEYERGVMSPSVEKAEKLVDILGEEILEPIDIL). Positions 153–172 (LGHLAYMLKTSRKSIYEYER) form a DNA-binding region, H-T-H motif.

This is Putative HTH-type transcriptional regulatory protein APE_0778 from Aeropyrum pernix (strain ATCC 700893 / DSM 11879 / JCM 9820 / NBRC 100138 / K1).